A 393-amino-acid chain; its full sequence is 4-hydroxyphenylpyruvate dioxygenase (393 aa).

Threonine 2 carries the N-acetylthreonine modification. 2 consecutive VOC domains span residues 18-149 and 180-338; these read HFHS…LVEK and MIDH…IFTK. Position 132 is an N6-succinyllysine (lysine 132). A Fe cation-binding site is contributed by histidine 183. Phosphoserine occurs at positions 211, 226, and 250. Fe cation is bound by residues histidine 266 and glutamate 349.

The protein belongs to the 4HPPD family. In terms of assembly, homodimer. The cofactor is Fe cation.

Its subcellular location is the cytoplasm. The protein localises to the endoplasmic reticulum membrane. It localises to the golgi apparatus membrane. The enzyme catalyses 3-(4-hydroxyphenyl)pyruvate + O2 = homogentisate + CO2. The protein operates within amino-acid degradation; L-phenylalanine degradation; acetoacetate and fumarate from L-phenylalanine: step 3/6. Its function is as follows. Catalyzes the conversion of 4-hydroxyphenylpyruvic acid to homogentisic acid, one of the steps in tyrosine catabolism. In Homo sapiens (Human), this protein is 4-hydroxyphenylpyruvate dioxygenase (HPD).